We begin with the raw amino-acid sequence, 219 residues long: Leucyl/phenylalanyl-tRNA--protein transferase (219 aa).

This sequence belongs to the L/F-transferase family.

It is found in the cytoplasm. The enzyme catalyses N-terminal L-lysyl-[protein] + L-leucyl-tRNA(Leu) = N-terminal L-leucyl-L-lysyl-[protein] + tRNA(Leu) + H(+). It catalyses the reaction N-terminal L-arginyl-[protein] + L-leucyl-tRNA(Leu) = N-terminal L-leucyl-L-arginyl-[protein] + tRNA(Leu) + H(+). The catalysed reaction is L-phenylalanyl-tRNA(Phe) + an N-terminal L-alpha-aminoacyl-[protein] = an N-terminal L-phenylalanyl-L-alpha-aminoacyl-[protein] + tRNA(Phe). Functions in the N-end rule pathway of protein degradation where it conjugates Leu, Phe and, less efficiently, Met from aminoacyl-tRNAs to the N-termini of proteins containing an N-terminal arginine or lysine. This is Leucyl/phenylalanyl-tRNA--protein transferase from Leptospira interrogans serogroup Icterohaemorrhagiae serovar copenhageni (strain Fiocruz L1-130).